We begin with the raw amino-acid sequence, 272 residues long: GEM-like protein 5 (272 aa).

The segment at Met-1–His-42 is disordered. A compositionally biased stretch (basic and acidic residues) spans Glu-16–Pro-27. Residues Ser-143–Val-221 enclose the GRAM domain.

This sequence belongs to the GEM family.

This Arabidopsis thaliana (Mouse-ear cress) protein is GEM-like protein 5.